The sequence spans 311 residues: Sensor histidine kinase YcbM (311 aa).

Residues 1–21 (MTVLWVAAVIALACLNVIQFI) traverse the membrane as a helical segment. Residues 22 to 311 (MKKKRDGNLA…FTITLKRMTY (290 aa)) lie on the Cytoplasmic side of the membrane. Residues 92 to 310 (NMSHDLKTPL…AFTITLKRMT (219 aa)) form the Histidine kinase domain. At His95 the chain carries Phosphohistidine; by autocatalysis.

Its subcellular location is the cell membrane. It catalyses the reaction ATP + protein L-histidine = ADP + protein N-phospho-L-histidine.. Its function is as follows. Member of the two-component regulatory system YcbM/YcbL. Probably activates YcbL by phosphorylation. The chain is Sensor histidine kinase YcbM (ycbM) from Bacillus subtilis (strain 168).